Reading from the N-terminus, the 368-residue chain is Probable multidrug ABC transporter permease YbhR (368 aa).

Topologically, residues 1 to 24 (MFHRLWTLIRKELQSLLREPQTRA) are cytoplasmic. A helical membrane pass occupies residues 25–45 (ILILPVLIQVILFPFAATLEV). At 46-173 (TNATIAIYDE…WYNPNLDYKW (128 aa)) the chain is on the periplasmic side. Residues 129 to 366 (AQIAANYLQQ…SAAYAMFRRK (238 aa)) enclose the ABC transmembrane type-2 domain. The chain crosses the membrane as a helical span at residues 174–194 (FVVPSLIAMITTIGVMIVTSL). Over 195 to 222 (SVAREREQGTLDQLLVSPLTTWQIFIGK) the chain is Cytoplasmic. The helical transmembrane segment at 223 to 243 (AVPALIVATFQATIVLAIGIW) threads the bilayer. Topologically, residues 244–253 (AYQIPFAGSL) are periplasmic. Residues 254–274 (ALFYFTMVIYGLSLVGFGLLI) form a helical membrane-spanning segment. The Cytoplasmic segment spans residues 275–284 (SSLCSTQQQA). Residues 285 to 305 (FIGVFVFMMPAILLSGYVSPV) traverse the membrane as a helical segment. Topologically, residues 306–339 (ENMPVWLQNLTWINPIRHFTDITKQIYLKDASLD) are periplasmic. The helical transmembrane segment at 340-360 (IVWNSLWPLLVITATTGSAAY) threads the bilayer. The Cytoplasmic portion of the chain corresponds to 361-368 (AMFRRKVM).

It belongs to the ABC-2 integral membrane protein family. As to quaternary structure, the complex is probably composed of two ATP-binding proteins (YbhF) and two transmembrane proteins (YbhR and YbhS).

It localises to the cell inner membrane. Functionally, part of the ABC transporter complex YbhFSR that could be involved in efflux of cefoperazone. Probably involved in the translocation of the substrate across the membrane. This Escherichia coli O157:H7 protein is Probable multidrug ABC transporter permease YbhR (ybhR).